Reading from the N-terminus, the 235-residue chain is tRNA (guanine-N(1)-)-methyltransferase (235 aa).

Residues Gly-112 and 131-136 (LGDFVL) each bind S-adenosyl-L-methionine.

The protein belongs to the RNA methyltransferase TrmD family. As to quaternary structure, homodimer.

It localises to the cytoplasm. It catalyses the reaction guanosine(37) in tRNA + S-adenosyl-L-methionine = N(1)-methylguanosine(37) in tRNA + S-adenosyl-L-homocysteine + H(+). Specifically methylates guanosine-37 in various tRNAs. The protein is tRNA (guanine-N(1)-)-methyltransferase of Synechococcus elongatus (strain ATCC 33912 / PCC 7942 / FACHB-805) (Anacystis nidulans R2).